Here is a 287-residue protein sequence, read N- to C-terminus: Phosphoribosylaminoimidazole-succinocarboxamide synthase (287 aa).

Belongs to the SAICAR synthetase family.

It carries out the reaction 5-amino-1-(5-phospho-D-ribosyl)imidazole-4-carboxylate + L-aspartate + ATP = (2S)-2-[5-amino-1-(5-phospho-beta-D-ribosyl)imidazole-4-carboxamido]succinate + ADP + phosphate + 2 H(+). It participates in purine metabolism; IMP biosynthesis via de novo pathway; 5-amino-1-(5-phospho-D-ribosyl)imidazole-4-carboxamide from 5-amino-1-(5-phospho-D-ribosyl)imidazole-4-carboxylate: step 1/2. The sequence is that of Phosphoribosylaminoimidazole-succinocarboxamide synthase from Neisseria meningitidis serogroup B (strain ATCC BAA-335 / MC58).